The sequence spans 195 residues: Interferon tau (195 aa).

The first 23 residues, 1–23, serve as a signal peptide directing secretion; the sequence is MAFVLSLRMALVLVSYCPGGSLG. 2 disulfides stabilise this stretch: Cys-24–Cys-122 and Cys-52–Cys-162. An N-linked (GlcNAc...) asparagine glycan is attached at Asn-101.

This sequence belongs to the alpha/beta interferon family. IFN-alphaII subfamily. As to expression, constitutively and exclusively expressed in the mononuclear cells of the extraembryonic trophectoderm.

It is found in the secreted. Its function is as follows. Paracrine hormone primarily responsible for maternal recognition of pregnancy. Interacts with endometrial receptors, probably type I interferon receptors, and blocks estrogen receptor expression, preventing the estrogen-induced increase in oxytocin receptor expression in the endometrium. This results in the suppression of the pulsatile endometrial release of the luteolytic hormone prostaglandin F2-alpha, hindering the regression of the corpus luteum (luteolysis) and therefore a return to ovarian cyclicity. This, and a possible direct effect of IFN-tau on prostaglandin synthesis, leads in turn to continued ovarian progesterone secretion, which stimulates the secretion by the endometrium of the nutrients required for the growth of the conceptus. In summary, displays particularly high antiviral and antiproliferative potency concurrently with particular weak cytotoxicity, high antiluteolytic activity and immunomodulatory properties. In contrast with other IFNs, IFN-tau is not virally inducible. The polypeptide is Interferon tau (IFNT) (Ovibos moschatus (Muskox)).